A 402-amino-acid polypeptide reads, in one-letter code: Propionate kinase (402 aa).

ATP is bound by residues asparagine 11 and lysine 18. Residue asparagine 11 participates in Mg(2+) binding. Residue arginine 86 participates in substrate binding. Aspartate 143 functions as the Proton donor/acceptor in the catalytic mechanism. Residues histidine 175, 203-207 (HLGNG), 278-280 (DLR), and 326-330 (GIGEN) contribute to the ATP site.

It belongs to the acetokinase family. TdcD subfamily. Homodimer. It depends on Mg(2+) as a cofactor.

It carries out the reaction propanoate + ATP = propanoyl phosphate + ADP. The protein operates within amino-acid degradation; L-threonine degradation via propanoate pathway; propanoate from L-threonine: step 4/4. Its function is as follows. Catalyzes the conversion of propionyl phosphate and ADP to propionate and ATP. This is Propionate kinase from Escherichia coli O6:H1 (strain CFT073 / ATCC 700928 / UPEC).